The chain runs to 334 residues: Glyceraldehyde-3-phosphate dehydrogenase (334 aa).

NAD(+) is bound by residues Arg10–Ile11, Asp33, Lys77, and Thr119. D-glyceraldehyde 3-phosphate-binding positions include Ser149–Thr151, Thr180, Thr209–Gly210, and Arg232. The active-site Nucleophile is Cys150. Asn314 provides a ligand contact to NAD(+).

It belongs to the glyceraldehyde-3-phosphate dehydrogenase family. Homotetramer.

The protein resides in the cytoplasm. It catalyses the reaction D-glyceraldehyde 3-phosphate + phosphate + NAD(+) = (2R)-3-phospho-glyceroyl phosphate + NADH + H(+). It participates in carbohydrate degradation; glycolysis; pyruvate from D-glyceraldehyde 3-phosphate: step 1/5. Its function is as follows. Catalyzes the oxidative phosphorylation of glyceraldehyde 3-phosphate (G3P) to 1,3-bisphosphoglycerate (BPG) using the cofactor NAD. The first reaction step involves the formation of a hemiacetal intermediate between G3P and a cysteine residue, and this hemiacetal intermediate is then oxidized to a thioester, with concomitant reduction of NAD to NADH. The reduced NADH is then exchanged with the second NAD, and the thioester is attacked by a nucleophilic inorganic phosphate to produce BPG. This Chlamydia trachomatis serovar D (strain ATCC VR-885 / DSM 19411 / UW-3/Cx) protein is Glyceraldehyde-3-phosphate dehydrogenase (gap).